The chain runs to 236 residues: Flagellar L-ring protein (236 aa).

Residues 1–16 form the signal peptide; sequence MRMQLTAVLAASLLAG. The N-palmitoyl cysteine moiety is linked to residue C17. The S-diacylglycerol cysteine moiety is linked to residue C17.

Belongs to the FlgH family. As to quaternary structure, the basal body constitutes a major portion of the flagellar organelle and consists of four rings (L,P,S, and M) mounted on a central rod.

It localises to the cell outer membrane. The protein resides in the bacterial flagellum basal body. Functionally, assembles around the rod to form the L-ring and probably protects the motor/basal body from shearing forces during rotation. The protein is Flagellar L-ring protein of Sinorhizobium fredii (strain NBRC 101917 / NGR234).